A 179-amino-acid chain; its full sequence is UPF0227 protein Sbal_2415 (179 aa).

Belongs to the UPF0227 family.

The chain is UPF0227 protein Sbal_2415 from Shewanella baltica (strain OS155 / ATCC BAA-1091).